Here is a 285-residue protein sequence, read N- to C-terminus: CCR4-NOT transcription complex subunit 7 (285 aa).

Residues aspartate 40, glutamate 42, aspartate 161, aspartate 230, and glutamate 278 each coordinate a divalent metal cation.

This sequence belongs to the CAF1 family. Component of the CCR4-NOT complex. It depends on Mn(2+) as a cofactor. The cofactor is Mg(2+). Co(2+) serves as cofactor.

The protein resides in the nucleus. Its subcellular location is the cytoplasm. The enzyme catalyses Exonucleolytic cleavage of poly(A) to 5'-AMP.. Has 3'-5' poly(A) exoribonuclease activity for synthetic poly(A) RNA substrate. Catalytic component of the CCR4-NOT complex which is one of the major cellular mRNA deadenylases and is linked to various cellular processes including bulk mRNA degradation, miRNA-mediated repression, translational repression during translational initiation and general transcription regulation. During miRNA-mediated repression the complex also seems to act as translational repressor during translational initiation. Additional complex functions may be a consequence of its influence on mRNA expression. The polypeptide is CCR4-NOT transcription complex subunit 7 (cnot7) (Xenopus laevis (African clawed frog)).